The primary structure comprises 149 residues: Protein SprT-like (149 aa).

One can recognise a SprT-like domain in the interval 4–143 (TDYVKQVSLE…CGLCRGKLLL (140 aa)). Position 64 (histidine 64) interacts with Zn(2+). Residue glutamate 65 is part of the active site. Histidine 68 is a binding site for Zn(2+).

It belongs to the SprT family. Requires Zn(2+) as cofactor.

It is found in the cytoplasm. The protein is Protein SprT-like of Streptococcus pneumoniae (strain Taiwan19F-14).